An 89-amino-acid chain; its full sequence is UPF0223 protein BCA_4066 (89 aa).

This sequence belongs to the UPF0223 family.

The protein is UPF0223 protein BCA_4066 of Bacillus cereus (strain 03BB102).